The chain runs to 157 residues: Endoribonuclease YbeY (157 aa).

Zn(2+)-binding residues include histidine 114, histidine 118, and histidine 124.

It belongs to the endoribonuclease YbeY family. Zn(2+) is required as a cofactor.

Its subcellular location is the cytoplasm. In terms of biological role, single strand-specific metallo-endoribonuclease involved in late-stage 70S ribosome quality control and in maturation of the 3' terminus of the 16S rRNA. In Yersinia enterocolitica serotype O:8 / biotype 1B (strain NCTC 13174 / 8081), this protein is Endoribonuclease YbeY.